We begin with the raw amino-acid sequence, 1405 residues long: DNA-directed RNA polymerase subunit beta' (1405 aa).

Zn(2+)-binding residues include Cys70, Cys72, Cys85, and Cys88. The Mg(2+) site is built by Asp460, Asp462, and Asp464. Residues Cys814, Cys888, Cys895, and Cys898 each coordinate Zn(2+).

The protein belongs to the RNA polymerase beta' chain family. The RNAP catalytic core consists of 2 alpha, 1 beta, 1 beta' and 1 omega subunit. When a sigma factor is associated with the core the holoenzyme is formed, which can initiate transcription. Mg(2+) serves as cofactor. The cofactor is Zn(2+).

The enzyme catalyses RNA(n) + a ribonucleoside 5'-triphosphate = RNA(n+1) + diphosphate. DNA-dependent RNA polymerase catalyzes the transcription of DNA into RNA using the four ribonucleoside triphosphates as substrates. The chain is DNA-directed RNA polymerase subunit beta' from Shewanella sp. (strain MR-7).